The sequence spans 261 residues: Lys-63-specific deubiquitinase BRCC36 (261 aa).

The MPN domain maps to 6–149 (VHIQGDAFLV…YTCFQSVQAQ (144 aa)). Zn(2+) is bound by residues His-92, His-94, and Asp-105. The short motif at 92-105 (HSHPHITVWPSHVD) is the JAMM motif element.

This sequence belongs to the peptidase M67A family. BRCC36 subfamily. As to quaternary structure, component of the BRCA1-A complex, at least composed of brca1, bard1, uimc1/rap80, abraxas1, brcc3/brcc36, babam2 and babam1/nba1. In the BRCA1-A complex, interacts directly with abraxas1 and babam2. Component of the BRISC complex, at least composed of abraxas2, brcc3/brcc36, babam2 and babam1/nba1. Within the complex, interacts directly with abraxas2. Both the BRCA1-A complex and the BRISC complex bind polyubiquitin. Zn(2+) serves as cofactor.

It is found in the nucleus. It localises to the cytoplasm. The protein localises to the cytoskeleton. Its subcellular location is the spindle pole. Metalloprotease that specifically cleaves 'Lys-63'-linked polyubiquitin chains. Does not have activity toward 'Lys-48'-linked polyubiquitin chains. Component of the BRCA1-A complex, a complex that specifically recognizes 'Lys-63'-linked ubiquitinated histones H2A and H2AX at DNA lesions sites, leading to target the brca1-bard1 heterodimer to sites of DNA damage at double-strand breaks (DSBs). In the BRCA1-A complex, it specifically removes 'Lys-63'-linked ubiquitin on histones H2A and H2AX, antagonizing the rnf8-dependent ubiquitination at double-strand breaks (DSBs). Catalytic subunit of the BRISC complex, a multiprotein complex that specifically cleaves 'Lys-63'-linked ubiquitin in various substrates. Mediates the specific 'Lys-63'-specific deubiquitination associated with the COP9 signalosome complex (CSN), via the interaction of the BRISC complex with the CSN complex. The BRISC complex is required for normal mitotic spindle assembly and microtubule attachment to kinetochores via its role in deubiquitinating numa1. Plays a role in interferon signaling via its role in the deubiquitination of the interferon receptor ifnar1; deubiquitination increases ifnar1 activity by enhancing its stability and cell surface expression. Acts as a regulator of the NLRP3 inflammasome by mediating deubiquitination of nlrp3. Down-regulates the response to bacterial lipopolysaccharide (LPS) via its role in ifnar1 deubiquitination. The chain is Lys-63-specific deubiquitinase BRCC36 (brcc3) from Xenopus tropicalis (Western clawed frog).